The chain runs to 702 residues: Antigen peptide transporter 2 (702 aa).

Residues 1 to 6 are Lumenal-facing; sequence MALSYL. Residues 7 to 27 traverse the membrane as a helical segment; sequence RPWVSLLLADMALLGLLQGSL. Topologically, residues 28–56 are cytoplasmic; sequence GNLLPQGLPGLWIEGTLRLGVLWGLLKVG. The chain crosses the membrane as a helical span at residues 57–77; that stretch reads ELLGLVGTLLPLLCLATPLFF. Over 78 to 98 the chain is Lumenal; the sequence is SLRALVGGTASTSVVRVASAS. The helical transmembrane segment at 99 to 119 threads the bilayer; sequence WGWLLAGYGAVALSWAVWAVL. Over 120 to 147 the chain is Cytoplasmic; that stretch reads SPAGVQEKEPGQENRTLMKRLLKLSRPD. Residues 148-168 form a helical membrane-spanning segment; sequence LPFLIAAFFFLVVAVWGETLI. An ABC transmembrane type-1 domain is found at 151 to 434; it reads LIAAFFFLVV…LVYMYGDMLS (284 aa). Residues 169 to 186 lie on the Lumenal side of the membrane; it reads PRYSGRVIDILGGDFDPD. A helical transmembrane segment spans residues 187-207; that stretch reads AFASAIFFMCLFSVGSSFSAG. Residues 208 to 265 are Cytoplasmic-facing; the sequence is CRGGSFLFTMSRINLRIREQLFSSLLRQDLGFFQETKTGELNSRLSSDTSLMSRWLPF. The helical transmembrane segment at 266–286 threads the bilayer; it reads NANILLRSLVKVVGLYFFMLQ. The Lumenal segment spans residues 287–292; sequence VSPRLT. Residues 293-313 traverse the membrane as a helical segment; the sequence is FLSLLDLPLTIAAEKVYNPRH. The interval 300–388 is part of the peptide-binding site; it reads PLTIAAEKVY…RRVMALGMQV (89 aa). Over 314–373 the chain is Cytoplasmic; it reads QAVLKEIQDAVAKAGQVVREAVGGLQTVRSFGAEEQEVSHYKEALERCRQLWWRRDLEKD. The chain crosses the membrane as a helical span at residues 374 to 394; the sequence is VYLVIRRVMALGMQVLILNCG. Residues 395 to 407 lie on the Lumenal side of the membrane; it reads VQQILAGEVTRGG. The chain crosses the membrane as a helical span at residues 408–428; sequence LLSFLLYQEEVGQYVRNLVYM. Residues 413–432 are part of the peptide-binding site; it reads LYQEEVGQYVRNLVYMYGDM. At 429–702 the chain is on the cytoplasmic side; sequence YGDMLSNVGA…AHLVQQRLEA (274 aa). The 235-residue stretch at 467–701 folds into the ABC transporter domain; sequence VEFQDVSFSY…YAHLVQQRLE (235 aa). 502-509 is an ATP binding site; it reads GPNGSGKS.

It belongs to the ABC transporter superfamily. ABCB family. MHC peptide exporter (TC 3.A.1.209) subfamily. Heterodimer of TAP1 and TAP2 (TAP1-TAP2). A component of the peptide loading complex (PLC), interacts via TAPBP with MHCI heterodimer; this interaction mediates peptide-MHCI assembly. Mg(2+) is required as a cofactor.

The protein localises to the endoplasmic reticulum membrane. The catalysed reaction is a peptide antigen(in) + ATP + H2O = a peptide antigen(out) + ADP + phosphate + H(+). Its function is as follows. ABC transporter associated with antigen processing. In complex with TAP1 mediates unidirectional translocation of peptide antigens from cytosol to endoplasmic reticulum (ER) for loading onto MHC class I (MHCI) molecules. Uses the chemical energy of ATP to export peptides against the concentration gradient. During the transport cycle alternates between 'inward-facing' state with peptide binding site facing the cytosol to 'outward-facing' state with peptide binding site facing the ER lumen. Peptide antigen binding to ATP-loaded TAP1-TAP2 induces a switch to hydrolysis-competent 'outward-facing' conformation ready for peptide loading onto nascent MHCI molecules. Subsequently ATP hydrolysis resets the transporter to the 'inward facing' state for a new cycle. As a component of the peptide loading complex (PLC), acts as a molecular scaffold essential for peptide-MHCI assembly and antigen presentation. The chain is Antigen peptide transporter 2 (Tap2) from Mus musculus (Mouse).